The primary structure comprises 482 residues: Anthocyanin 3'-O-beta-glucosyltransferase (482 aa).

The active-site Proton acceptor is histidine 16. Residue histidine 16 coordinates an anthocyanidin. Aspartate 119 acts as the Charge relay in catalysis. UDP-alpha-D-glucose is bound by residues alanine 349, glutamine 351, histidine 366, tryptophan 369, asparagine 370, serine 371, and glutamate 374. Position 389 (alanine 389) interacts with an anthocyanidin. UDP-alpha-D-glucose contacts are provided by glutamate 390 and glutamine 391.

This sequence belongs to the UDP-glycosyltransferase family. In terms of processing, the N-terminus is blocked. Abundant in petals and barely detected in leaves.

The enzyme catalyses delphinidin 3,5-bis-O-beta-D-glucoside + UDP-alpha-D-glucose = delphinidin 3,3',5-tri-O-beta-D-glucoside + UDP + H(+). Specifically glucosylates the 3'-hydroxy group of delphinidin 3,5-di-O-glucoside to produce gentiodelphin. Shows a strict specificity for UDP-glucose as donor. The sequence is that of Anthocyanin 3'-O-beta-glucosyltransferase from Gentiana triflora (Clustered gentian).